The primary structure comprises 366 residues: N-acetyl-6-hydroxytryptophan oxidase ivoB (366 aa).

Residues 1–18 (MHLLSSLAALAAAITVAF) form the signal peptide. Asparagine 28 and asparagine 81 each carry an N-linked (GlcNAc...) asparagine glycan. 2 residues coordinate Cu cation: histidine 87 and histidine 96. 2 N-linked (GlcNAc...) asparagine glycosylation sites follow: asparagine 114 and asparagine 121. Histidine 291 is a Cu cation binding site. Asparagine 319 is a glycosylation site (N-linked (GlcNAc...) asparagine).

This sequence belongs to the tyrosinase family. Cu(2+) is required as a cofactor.

Its pathway is pigment biosynthesis. Its activity is regulated as follows. Activity is inhibited by 2,3-dihydroxynaphthalene, phenylhydrazine, diethyl dithiocarbamate and 8-hydroxyquinolene. In terms of biological role, nonribosomal peptide synthetase; part of the pathway that mediates the biosynthesis of the gray-brown conidiophore pigment. The first step of the pathway is performed by the nonribosomal peptide synthetase ivoA that catalyzes ATP-dependent unidirectional stereoinversion of L-tryptophan to D-tryptophan with complete conversion. While the stereoinversion is catalyzed by the epimerization (E) domain of ivoA, the terminal condensation (C) domain stereoselectively hydrolyzes D-tryptophanyl-S-phosphopantetheine thioester and thus represents a non-canonical C domain function. D-tryptophan is acetylated, probably by an endogenous acetyltransferase. N-acetyltryptophan is further 6-hydroxylated into N-acetyl-6-hydroxytryptophan (AHT) by the cytochrome P450 monooxygenase ivoC. N-acetyl-6-hydroxytryptophan is substrate of the N-acetyl-6-hydroxytryptophan oxidase ivoB to produce the gray-brown conidiophore pigment. This Emericella nidulans (strain FGSC A4 / ATCC 38163 / CBS 112.46 / NRRL 194 / M139) (Aspergillus nidulans) protein is N-acetyl-6-hydroxytryptophan oxidase ivoB.